Consider the following 655-residue polypeptide: Probable replication restart protein PriA (655 aa).

Residues cysteine 368, cysteine 371, cysteine 377, cysteine 380, cysteine 396, cysteine 399, cysteine 408, and cysteine 411 each contribute to the Zn(2+) site.

It belongs to the helicase family. PriA subfamily. As to quaternary structure, component of the replication restart primosome. Zn(2+) is required as a cofactor.

In terms of biological role, initiates the restart of stalled replication forks, which reloads the replicative helicase on sites other than the origin of replication. Recognizes and binds to abandoned replication forks and remodels them to uncover a helicase loading site. Promotes assembly of the primosome at these replication forks. This is Probable replication restart protein PriA from Mycobacterium bovis (strain ATCC BAA-935 / AF2122/97).